The chain runs to 87 residues: Small ribosomal subunit protein bS20 (87 aa).

Belongs to the bacterial ribosomal protein bS20 family.

Its function is as follows. Binds directly to 16S ribosomal RNA. The chain is Small ribosomal subunit protein bS20 from Shigella flexneri serotype 5b (strain 8401).